The sequence spans 302 residues: uncharacterized protein (302 aa).

Positions 1 to 60 constitute an HTH lysR-type domain; that stretch reads MRMNMSDFATFFAVARNQSFRAAGDELGLSSSAISHSIKTLEQRLKIRLFNRTTRSVSLT. The segment at residues 20–40 is a DNA-binding region (H-T-H motif); it reads FRAAGDELGLSSSAISHSIKT.

The protein belongs to the LysR transcriptional regulatory family.

This is an uncharacterized protein from Escherichia coli (strain K12).